The following is a 46-amino-acid chain: Esculentin-1HSa (46 aa).

Cys40 and Cys46 are joined by a disulfide.

In terms of tissue distribution, expressed by the skin glands.

It localises to the secreted. Its function is as follows. Has antibacterial activity against the Gram-positive bacterium S.aureus ATCC 25923 (MIC=12 uM) and the Gram-negative bacterium E.coli ATCC 25726 (MIC=12 uM). The protein is Esculentin-1HSa of Odorrana hosii (Hose's rock frog).